A 428-amino-acid chain; its full sequence is tRNA(Ile)-lysidine synthase (428 aa).

ATP is bound at residue 28-33 (SGGVDS).

It belongs to the tRNA(Ile)-lysidine synthase family.

The protein resides in the cytoplasm. The enzyme catalyses cytidine(34) in tRNA(Ile2) + L-lysine + ATP = lysidine(34) in tRNA(Ile2) + AMP + diphosphate + H(+). Functionally, ligates lysine onto the cytidine present at position 34 of the AUA codon-specific tRNA(Ile) that contains the anticodon CAU, in an ATP-dependent manner. Cytidine is converted to lysidine, thus changing the amino acid specificity of the tRNA from methionine to isoleucine. The polypeptide is tRNA(Ile)-lysidine synthase (Streptococcus pyogenes serotype M3 (strain ATCC BAA-595 / MGAS315)).